A 160-amino-acid chain; its full sequence is Transcription elongation factor GreA (160 aa).

The stretch at 1–71 (MAEKTYPMTK…GQISTLETQI (71 aa)) forms a coiled coil.

The protein belongs to the GreA/GreB family.

In terms of biological role, necessary for efficient RNA polymerase transcription elongation past template-encoded arresting sites. The arresting sites in DNA have the property of trapping a certain fraction of elongating RNA polymerases that pass through, resulting in locked ternary complexes. Cleavage of the nascent transcript by cleavage factors such as GreA or GreB allows the resumption of elongation from the new 3'terminus. GreA releases sequences of 2 to 3 nucleotides. The polypeptide is Transcription elongation factor GreA (Streptococcus uberis (strain ATCC BAA-854 / 0140J)).